We begin with the raw amino-acid sequence, 306 residues long: MSQYHIPVMLSEVLAVLAPKGYESYLDCTFGAGGYSNAILNSCYCSVTSLDRDPNVIESVEKIKQDYGERFNFIKTNFADSFRKLKHKKFDGIVMDLGVSSMQLDIADRGFSFLYDGPLDMRMSVQGFSAEEFVNTADEEEIADVIYKYGNESLSRRIAKSIVEYRKTARIDSTRKLAEIVRYSIGFRKGKIDSATKTFQAIRIYINNELEELEQFLANVKNILKKDGRLVVVSFHSLEDRIVKNFFKENSEKQVARSKYAKDEIKIDPNKWLKIITPKVLTPSSQEIRLNVRARSAKLRAAKKII.

S-adenosyl-L-methionine-binding positions include 33 to 35 (GGY), D51, F78, D96, and Q103.

This sequence belongs to the methyltransferase superfamily. RsmH family.

The protein localises to the cytoplasm. The catalysed reaction is cytidine(1402) in 16S rRNA + S-adenosyl-L-methionine = N(4)-methylcytidine(1402) in 16S rRNA + S-adenosyl-L-homocysteine + H(+). Its function is as follows. Specifically methylates the N4 position of cytidine in position 1402 (C1402) of 16S rRNA. The chain is Ribosomal RNA small subunit methyltransferase H from Rickettsia prowazekii (strain Madrid E).